Here is a 1482-residue protein sequence, read N- to C-terminus: Chromosome partition protein MukB (1482 aa).

34–41 provides a ligand contact to ATP; sequence GGNGAGKS. 5 coiled-coil regions span residues 326 to 472, 507 to 602, 780 to 805, 832 to 1110, and 1209 to 1265; these read LEAD…QTAH, NQRH…RRAP, RAARENRIETLHAERESLSERFATLS, DDPE…REQV, and VEAI…LQSV. The interval 666 to 783 is flexible hinge; the sequence is PGGSEDPRLN…SLPLFGRAAR (118 aa).

Belongs to the SMC family. MukB subfamily. In terms of assembly, homodimerization via its hinge domain. Binds to DNA via its C-terminal region. Interacts, and probably forms a ternary complex, with MukE and MukF via its C-terminal region. The complex formation is stimulated by calcium or magnesium. Interacts with tubulin-related protein FtsZ.

Its subcellular location is the cytoplasm. The protein resides in the nucleoid. Its function is as follows. Plays a central role in chromosome condensation, segregation and cell cycle progression. Functions as a homodimer, which is essential for chromosome partition. Involved in negative DNA supercoiling in vivo, and by this means organize and compact chromosomes. May achieve or facilitate chromosome segregation by condensation DNA from both sides of a centrally located replisome during cell division. The polypeptide is Chromosome partition protein MukB (Klebsiella pneumoniae subsp. pneumoniae (strain ATCC 700721 / MGH 78578)).